The chain runs to 274 residues: Putative pyruvate, phosphate dikinase regulatory protein (274 aa).

An ADP-binding site is contributed by 150-157 (GPSRTSKT).

The protein belongs to the pyruvate, phosphate/water dikinase regulatory protein family. PDRP subfamily.

The catalysed reaction is N(tele)-phospho-L-histidyl/L-threonyl-[pyruvate, phosphate dikinase] + ADP = N(tele)-phospho-L-histidyl/O-phospho-L-threonyl-[pyruvate, phosphate dikinase] + AMP + H(+). It catalyses the reaction N(tele)-phospho-L-histidyl/O-phospho-L-threonyl-[pyruvate, phosphate dikinase] + phosphate + H(+) = N(tele)-phospho-L-histidyl/L-threonyl-[pyruvate, phosphate dikinase] + diphosphate. Bifunctional serine/threonine kinase and phosphorylase involved in the regulation of the pyruvate, phosphate dikinase (PPDK) by catalyzing its phosphorylation/dephosphorylation. The sequence is that of Putative pyruvate, phosphate dikinase regulatory protein from Rickettsia peacockii (strain Rustic).